Consider the following 327-residue polypeptide: Probable cell division protein WhiA (327 aa).

Residues 275-308 constitute a DNA-binding region (H-T-H motif); sequence SLEELGRLADPQMTKDAVAGRIRRLLTMADKRAE.

The protein belongs to the WhiA family.

In terms of biological role, involved in cell division and chromosome segregation. The polypeptide is Probable cell division protein WhiA (Corynebacterium glutamicum (strain R)).